Here is a 404-residue protein sequence, read N- to C-terminus: Cysteine desulfurase IscS (404 aa).

Pyridoxal 5'-phosphate is bound by residues 85–86, Asn-165, Gln-193, 213–215, and Thr-251; these read GT and SGH. Cys-338 serves as the catalytic Cysteine persulfide intermediate. Cys-338 is a binding site for [2Fe-2S] cluster.

This sequence belongs to the class-V pyridoxal-phosphate-dependent aminotransferase family. NifS/IscS subfamily. Homodimer. Forms a heterotetramer with IscU, interacts with other sulfur acceptors. Requires pyridoxal 5'-phosphate as cofactor.

It localises to the cytoplasm. It catalyses the reaction (sulfur carrier)-H + L-cysteine = (sulfur carrier)-SH + L-alanine. It functions in the pathway cofactor biosynthesis; iron-sulfur cluster biosynthesis. In terms of biological role, master enzyme that delivers sulfur to a number of partners involved in Fe-S cluster assembly, tRNA modification or cofactor biosynthesis. Catalyzes the removal of elemental sulfur atoms from cysteine to produce alanine. Functions as a sulfur delivery protein for Fe-S cluster synthesis onto IscU, an Fe-S scaffold assembly protein, as well as other S acceptor proteins. This Methanosarcina thermophila protein is Cysteine desulfurase IscS.